The following is a 479-amino-acid chain: Glycine betaine methyltransferase (479 aa).

Belongs to the trimethylamine methyltransferase family.

The catalysed reaction is Co(I)-[glycine betaine-specific corrinoid protein] + glycine betaine + H(+) = methyl-Co(III)-[glycine betaine-specific corrinoid protein] + N,N-dimethylglycine. Methyltransferase able to methylate free cob(I)alamin in vitro, using glycine betaine as the methyl donor, yealding methylcobalamin (methylCbl) and dimethylglycine. In vivo, probably carries out the methylation of a corrinoid protein, likely the adjacently encoded DSY3155, with glycine betaine, to then supply methyl groups to tetrahydrofolate (THF) for ultimate conversion to carbon dioxide; oxidation of the methyl group would also provide reducing equivalents for anaerobic respiration. Thus, may function in the pathway that allows anaerobic methylotrophic growth of D.hafniense using glycine betaine. Cannot use quaternary amines such as carnitine and choline as substrates, nor tertiary amines such as dimethylglycine or trimethylamine. This Desulfitobacterium hafniense (strain Y51) protein is Glycine betaine methyltransferase.